A 203-amino-acid chain; its full sequence is Holliday junction branch migration complex subunit RuvA (203 aa).

Positions 1–61 are domain I; the sequence is MIIYKYGKIM…EYTKVTYGFD (61 aa). Positions 62–139 are domain II; the sequence is NFKELVIFED…KFMKKLTSDE (78 aa). Positions 140 to 147 are flexible linker; the sequence is AAKIKVPA. The domain III stretch occupies residues 147–203; that stretch reads ASSENENKFLDTMKMLGFKQQQIKFALDKIELNDDIETCVENAIKLISQQQHETSRV.

The protein belongs to the RuvA family. As to quaternary structure, homotetramer. Forms an RuvA(8)-RuvB(12)-Holliday junction (HJ) complex. HJ DNA is sandwiched between 2 RuvA tetramers; dsDNA enters through RuvA and exits via RuvB. An RuvB hexamer assembles on each DNA strand where it exits the tetramer. Each RuvB hexamer is contacted by two RuvA subunits (via domain III) on 2 adjacent RuvB subunits; this complex drives branch migration. In the full resolvosome a probable DNA-RuvA(4)-RuvB(12)-RuvC(2) complex forms which resolves the HJ.

The protein localises to the cytoplasm. The RuvA-RuvB-RuvC complex processes Holliday junction (HJ) DNA during genetic recombination and DNA repair, while the RuvA-RuvB complex plays an important role in the rescue of blocked DNA replication forks via replication fork reversal (RFR). RuvA specifically binds to HJ cruciform DNA, conferring on it an open structure. The RuvB hexamer acts as an ATP-dependent pump, pulling dsDNA into and through the RuvAB complex. HJ branch migration allows RuvC to scan DNA until it finds its consensus sequence, where it cleaves and resolves the cruciform DNA. This Metamycoplasma arthritidis (strain 158L3-1) (Mycoplasma arthritidis) protein is Holliday junction branch migration complex subunit RuvA.